The following is a 281-amino-acid chain: Elongation factor 1-delta (281 aa).

A2 is modified (N-acetylalanine). K17 bears the N6-acetyllysine mark. A phosphoserine mark is found at S37, S44, S60, S86, and S106. The segment at 80–115 (LVVRIASLEVENQSLRGVVQELQQAISKLEARLNVL) is leucine-zipper. K107 bears the N6-acetyllysine mark. K117 carries the N6-acetyllysine; alternate modification. K117 is modified (N6-succinyllysine; alternate). Residues 118–172 (SSPGHRATAPQTQHVSPMRQVEPPAKKPATPAEDDEDDDIDLFGSDNEEEDKEAA) form a disordered region. S119 bears the Phosphoserine mark. Residue T129 is modified to Phosphothreonine. S133 bears the Phosphoserine mark. Residue T147 is modified to Phosphothreonine. The span at 149-169 (AEDDEDDDIDLFGSDNEEEDK) shows a compositional bias: acidic residues. S162 carries the post-translational modification Phosphoserine; by CK2. The segment at 173 to 281 (QLREERLRQY…SVDIAAFNKI (109 aa)) is catalytic (GEF).

This sequence belongs to the EF-1-beta/EF-1-delta family. As to quaternary structure, EF-1 is composed of 4 subunits: alpha, beta, delta isoform 1, and gamma. Isoform 2 interacts with HSF1 and NFE2L2.

It localises to the nucleus. Its function is as follows. EF-1-beta and EF-1-delta stimulate the exchange of GDP bound to EF-1-alpha to GTP, regenerating EF-1-alpha for another round of transfer of aminoacyl-tRNAs to the ribosome. Regulates induction of heat-shock-responsive genes through association with heat shock transcription factors and direct DNA-binding at heat shock promoter elements (HSE). The polypeptide is Elongation factor 1-delta (EEF1D) (Macaca fascicularis (Crab-eating macaque)).